The sequence spans 431 residues: Protein CLT2, chloroplastic (431 aa).

The N-terminal 79 residues, 1–79, are a transit peptide targeting the chloroplast; sequence MDTVLMATTP…PMRRPRFSVG (79 aa). A run of 10 helical transmembrane segments spans residues 99 to 119, 122 to 142, 163 to 183, 188 to 208, 212 to 232, 244 to 264, 284 to 304, 343 to 363, 365 to 385, and 403 to 423; these read VVIV…LVPM, YPFF…FTIL, FAII…AAAM, VIPI…LLIL, FLLN…VAVS, IGFL…GASI, IFVV…LLLP, ILPL…LHLV, ISSA…AVYI, and FTMG…PTTP.

The protein belongs to the CRT-like transporter family.

The protein resides in the plastid. It localises to the chloroplast membrane. Involved in thiol transport from the plastid to the cytosol. Transports probably both glutathione (GSH) and its precursor, gamma-glutamylcysteine (gamma-EC). The polypeptide is Protein CLT2, chloroplastic (Arabidopsis thaliana (Mouse-ear cress)).